The chain runs to 518 residues: Membrane-bound glycerophospholipid O-acyltransferase 2 (518 aa).

6 helical membrane-spanning segments follow: residues 21–41 (PVDQVNFVVCQLFALLAAIWF), 60–80 (TLLGLYLALFCFGWYALHFVI), 87–107 (YLMIIIGVENMHKYCFVFALG), 183–203 (FMGILAGPLCSYKDYITFIEG), 230–250 (IAVAQKLLICGLSLLFHMTIT), and 267–283 (ASWPVRVFYLYLSLMAA). Catalysis depends on residues asparagine 341 and histidine 372. 3 consecutive transmembrane segments (helical) span residues 365–385 (FILSAIWHGVYPGYYLTFLTG), 415–435 (IITWMTTQVAISYTVVPFVLL), and 443–463 (FYSSCYFCLHIASILVLLVFP).

This sequence belongs to the membrane-bound acyltransferase family.

The protein resides in the endoplasmic reticulum membrane. It catalyses the reaction a 1-acyl-sn-glycero-3-phosphocholine + an acyl-CoA = a 1,2-diacyl-sn-glycero-3-phosphocholine + CoA. The catalysed reaction is a 1-acyl-sn-glycero-3-phosphoethanolamine + an acyl-CoA = a 1,2-diacyl-sn-glycero-3-phosphoethanolamine + CoA. It carries out the reaction a 1-acyl-sn-glycero-3-phosphate + an acyl-CoA = a 1,2-diacyl-sn-glycero-3-phosphate + CoA. The enzyme catalyses (9Z)-hexadecenoyl-CoA + 1-hexadecanoyl-sn-glycero-3-phosphocholine = 1-hexadecanoyl-2-(9Z-hexadecenoyl)-sn-glycero-3-phosphocholine + CoA. It catalyses the reaction 1-hexadecanoyl-sn-glycero-3-phosphoethanolamine + (9Z)-octadecenoyl-CoA = 1-hexadecanoyl-2-(9Z-octadecenoyl)-sn-glycero-3-phosphoethanolamine + CoA. The catalysed reaction is 1-hexadecanoyl-sn-glycero-3-phosphoethanolamine + (9Z)-hexadecenoyl-CoA = 1-hexadecanoyl-2-(9Z)-hexadecenoyl-sn-glycero-3-phosphoethanolamine + CoA. It carries out the reaction 1-(9Z-octadecenoyl)-sn-glycero-3-phospho-L-serine + hexadecanoyl-CoA = 1-(9Z)-octadecenoyl-2-hexadecanoyl-sn-glycero-3-phosphoserine + CoA. The enzyme catalyses (9Z,12Z)-octadecadienoyl-CoA + 1-hexadecanoyl-sn-glycero-3-phosphocholine = 1-hexadecanoyl-2-(9Z,12Z-octadecadienoyl)-sn-glycero-3-phosphocholine + CoA. It catalyses the reaction 1-hexadecanoyl-sn-glycero-3-phosphocholine + (9Z)-octadecenoyl-CoA = 1-hexadecanoyl-2-(9Z-octadecenoyl)-sn-glycero-3-phosphocholine + CoA. The catalysed reaction is 1-hexadecanoyl-sn-glycero-3-phosphate + (9Z)-hexadecenoyl-CoA = 1-hexadecanoyl-2-[(9Z)-hexadec-9-enoyl]-sn-glycero-3-phosphate + CoA. It carries out the reaction 1-hexadecanoyl-sn-glycero-3-phosphate + (9Z)-octadecenoyl-CoA = 1-hexadecanoyl-2-(9Z-octadecenoyl)-sn-glycero-3-phosphate + CoA. The enzyme catalyses a 1-O-(1Z-alkenyl)-sn-glycero-3-phosphocholine + (9Z)-octadecenoyl-CoA = 1-O-(1Z)-alkenyl-2-(9Z)-octadecenoyl-sn-glycero-3-phosphocholine + CoA. It catalyses the reaction a 1-O-(1Z-alkenyl)-sn-glycero-3-phosphoethanolamine + (9Z)-octadecenoyl-CoA = 1-O-(1Z)-alkenyl-2-(9Z)-octadecenoyl-sn-glycero-3-phosphoethanolamine + CoA. The catalysed reaction is 1-octadecanoyl-sn-glycero-3-phosphoethanolamine + (9Z)-octadecenoyl-CoA = 1-octadecanoyl-2-(9Z-octadecenoyl)-sn-glycero-3-phosphoethanolamine + CoA. It carries out the reaction 1-octadecanoyl-sn-glycero-3-phosphocholine + (9Z)-octadecenoyl-CoA = 1-octadecanoyl-2-(9Z-octadecenoyl)-sn-glycero-3-phosphocholine + CoA. The enzyme catalyses 1-(9Z-octadecenoyl)-sn-glycero-3-phosphoethanolamine + (9Z)-octadecenoyl-CoA = 1,2-di-(9Z-octadecenoyl)-sn-glycero-3-phosphoethanolamine + CoA. The protein operates within lipid metabolism; phospholipid metabolism. Functionally, acyltransferase which catalyzes the transfer of an acyl group from an acyl-CoA to a lysophospholipid leading to the production of a phospholipid and participates in the reacylation step of the phospholipid remodeling pathway also known as the Lands cycle. May catalyze preferentially the acylation of lysophosphatidylethanolamine (1-acyl-sn-glycero-3-phosphoethanolamine or LPE) and lysophosphatidic acid (LPA) and to a lesser extend lysophosphatidylcholine (LPC) and lysophosphatidylserine (LPS). Prefers oleoyl-CoA as the acyl donor. This Gallus gallus (Chicken) protein is Membrane-bound glycerophospholipid O-acyltransferase 2.